A 262-amino-acid chain; its full sequence is Nodulation protein J (262 aa).

An ABC transmembrane type-2 domain is found at 33-259 (ASLLGNLADP…FASIALFRRR (227 aa)). Transmembrane regions (helical) follow at residues 37–57 (GNLA…GLIV), 64–84 (SYIA…SATF), 102–122 (GILF…VWAA), 125–145 (SVLA…ASWT), 149–169 (CAIP…MVVI), 177–197 (YFVF…GAVF), and 236–256 (LHVG…IALF).

This sequence belongs to the ABC-2 integral membrane protein family. Lipooligosaccharide exporter (TC 3.A.1.102) subfamily. As to quaternary structure, the complex is composed of two ATP-binding proteins (NodI) and two transmembrane proteins (NodJ).

The protein localises to the cell inner membrane. Functionally, part of the ABC transporter complex NodIJ involved in the export of the nodulation factors (Nod factors), the bacterial signal molecules that induce symbiosis and subsequent nodulation induction. Nod factors are LCO (lipo-chitin oligosaccharide), a modified beta-1,4-linked N-acetylglucosamine oligosaccharide. This subunit encodes the transporter. The sequence is that of Nodulation protein J (nodJ) from Bradyrhizobium diazoefficiens (strain JCM 10833 / BCRC 13528 / IAM 13628 / NBRC 14792 / USDA 110).